A 173-amino-acid polypeptide reads, in one-letter code: T-cell receptor beta-2 chain C region (173 aa).

Residues 1–146 (EDLRNVTPPK…GVLSATILYE (146 aa)) are c region. N67 and N116 each carry an N-linked (GlcNAc...) asparagine glycan. A helical transmembrane segment spans residues 147–168 (ILLGKATLYAVLVSGLVLMAMV). The Cytoplasmic segment spans residues 169 to 173 (KKKNS).

The protein resides in the membrane. The protein is T-cell receptor beta-2 chain C region of Mus musculus (Mouse).